The following is a 174-amino-acid chain: Larval cuticle protein A1A (174 aa).

2 tandem repeats follow at residues 45–48 (AAPV) and 67–70 (AAPV). Residues 84–150 (NPQYSFGYDV…AVVHREPLVA (67 aa)) form the Chitin-binding type R&amp;R domain. Copy 3 of the repeat occupies 155–158 (AAPA).

Functionally, component of the cuticle of the larva of Tenebrio molitor. In Tenebrio molitor (Yellow mealworm beetle), this protein is Larval cuticle protein A1A.